A 416-amino-acid chain; its full sequence is Adenylosuccinate synthetase (416 aa).

GTP-binding positions include 13 to 19 and 41 to 43; these read GDEGKGK and GHT. Residue D14 is the Proton acceptor of the active site. Positions 14 and 41 each coordinate Mg(2+). IMP-binding positions include 14 to 17, 39 to 42, T126, R140, Q220, T235, and R299; these read DEGK and NAGH. The active-site Proton donor is the H42. 295–301 provides a ligand contact to substrate; sequence VSTGRKR. Residues R301, 327-329, and 405-407 contribute to the GTP site; these read KLD and STS.

Belongs to the adenylosuccinate synthetase family. As to quaternary structure, homodimer. Requires Mg(2+) as cofactor.

Its subcellular location is the cytoplasm. It carries out the reaction IMP + L-aspartate + GTP = N(6)-(1,2-dicarboxyethyl)-AMP + GDP + phosphate + 2 H(+). It participates in purine metabolism; AMP biosynthesis via de novo pathway; AMP from IMP: step 1/2. Functionally, plays an important role in the de novo pathway of purine nucleotide biosynthesis. Catalyzes the first committed step in the biosynthesis of AMP from IMP. The polypeptide is Adenylosuccinate synthetase (Campylobacter jejuni subsp. jejuni serotype O:6 (strain 81116 / NCTC 11828)).